The following is a 773-amino-acid chain: Probable serine/threonine-protein kinase MARK-C (773 aa).

The segment covering 1-27 (MESNKSSSHGDVSTSPSFLNNHHQFNN) has biased composition (polar residues). The tract at residues 1-32 (MESNKSSSHGDVSTSPSFLNNHHQFNNGGDII) is disordered. The Protein kinase domain occupies 46 to 300 (YEVGKTLGNG…IQELKNHPWT (255 aa)). Residues 52-60 (LGNGTFGKV) and Lys-75 contribute to the ATP site. Asp-171 serves as the catalytic Proton acceptor. A coiled-coil region spans residues 362-390 (RYASKEVENLKSKLELLSKRKKSFSDKRN). 3 disordered regions span residues 382–445 (KKSF…SQGS), 462–487 (DNDIENSDNNKSSSLTRRSSDPNKDI), and 558–588 (YSIQQQQLQQQQQQQQEQHKEDNNKPNTNLR). Over residues 405–443 (DLSSNNNNNQQQQNSPPSKTNSSSTSSSNRESNNNSPSQ) the composition is skewed to low complexity. A coiled-coil region spans residues 445–474 (SIKEISLDELDNHIEQLDNDIENSDNNKSS). Positions 468 to 478 (SDNNKSSSLTR) are enriched in polar residues. A compositionally biased stretch (low complexity) spans 561–573 (QQQQLQQQQQQQQ). Residues 724 to 773 (CFDEDNSVKFQIEIVKICNLDLTGIQLKRLSGDTWKYKDICTELVESMKL) enclose the KA1 domain.

It belongs to the protein kinase superfamily. CAMK Ser/Thr protein kinase family. SNF1 subfamily.

It carries out the reaction L-seryl-[protein] + ATP = O-phospho-L-seryl-[protein] + ADP + H(+). The catalysed reaction is L-threonyl-[protein] + ATP = O-phospho-L-threonyl-[protein] + ADP + H(+). The sequence is that of Probable serine/threonine-protein kinase MARK-C (mrkC) from Dictyostelium discoideum (Social amoeba).